The following is a 510-amino-acid chain: Maturase K (510 aa).

Belongs to the intron maturase 2 family. MatK subfamily.

It is found in the plastid. Its subcellular location is the chloroplast. In terms of biological role, usually encoded in the trnK tRNA gene intron. Probably assists in splicing its own and other chloroplast group II introns. This Mammillaria haageana (Cactus) protein is Maturase K.